Here is a 444-residue protein sequence, read N- to C-terminus: Structure-specific endonuclease subunit SLX1 (444 aa).

The region spanning 23–105 (AFYCCYLLRS…QNTKVSRHAD (83 aa)) is the GIY-YIG domain. The segment at 240-295 (CGVCKQRLILQHDIIAVCSHSSCHCAAHLSCLSSHFLKDKDSDSELIPREGTCPAC) adopts an SLX1-type zinc-finger fold. 2 disordered regions span residues 323–355 (RRRRQAGTPKGQGLKSVRGRGRGHSEDESDALQ) and 386–444 (AHRP…EVIE).

The protein belongs to the SLX1 family. In terms of assembly, forms a heterodimer with SLX4. A divalent metal cation is required as a cofactor.

It localises to the nucleus. Its function is as follows. Catalytic subunit of the SLX1-SLX4 structure-specific endonuclease that resolves DNA secondary structures generated during DNA repair and recombination. Has endonuclease activity towards branched DNA substrates, introducing single-strand cuts in duplex DNA close to junctions with ss-DNA. In Paracoccidioides brasiliensis (strain Pb18), this protein is Structure-specific endonuclease subunit SLX1.